A 273-amino-acid chain; its full sequence is Hydroxyethylthiazole kinase (273 aa).

M47 is a substrate binding site. 2 residues coordinate ATP: R123 and T172. G199 contacts substrate.

This sequence belongs to the Thz kinase family. Requires Mg(2+) as cofactor.

It carries out the reaction 5-(2-hydroxyethyl)-4-methylthiazole + ATP = 4-methyl-5-(2-phosphooxyethyl)-thiazole + ADP + H(+). It participates in cofactor biosynthesis; thiamine diphosphate biosynthesis; 4-methyl-5-(2-phosphoethyl)-thiazole from 5-(2-hydroxyethyl)-4-methylthiazole: step 1/1. Catalyzes the phosphorylation of the hydroxyl group of 4-methyl-5-beta-hydroxyethylthiazole (THZ). This Ruminiclostridium cellulolyticum (strain ATCC 35319 / DSM 5812 / JCM 6584 / H10) (Clostridium cellulolyticum) protein is Hydroxyethylthiazole kinase.